The sequence spans 350 residues: Zinc finger protein 367 (350 aa).

Residues 104-151 form a disordered region; the sequence is SGLRGRGAPPPAASASAAASGGEDEEEASSPDSGHLKDGIRRGRPRAD. The span at 137–151 shows a compositional bias: basic and acidic residues; sequence GHLKDGIRRGRPRAD. 2 consecutive C2H2-type zinc fingers follow at residues 167–189 and 195–219; these read IRCN…KRTH and YLCD…QRLH. The disordered stretch occupies residues 290-327; sequence KGKLVQKADQEQQDPLEYLQSDEEDDEKRGAQRRLQEQ. A coiled-coil region spans residues 308–342; that stretch reads LQSDEEDDEKRGAQRRLQEQRERLHGALALIELAN. Ser-310 carries the phosphoserine modification. A compositionally biased stretch (basic and acidic residues) spans 316 to 327; it reads EKRGAQRRLQEQ.

The protein belongs to the krueppel C2H2-type zinc-finger protein family.

The protein resides in the nucleus. Transcriptional activator. Isoform 1 may be involved in transcriptional activation of erythroid genes. The chain is Zinc finger protein 367 (ZNF367) from Homo sapiens (Human).